Reading from the N-terminus, the 198-residue chain is ATP-dependent Clp protease proteolytic subunit (198 aa).

The active-site Nucleophile is serine 103. Histidine 128 is an active-site residue.

This sequence belongs to the peptidase S14 family. As to quaternary structure, fourteen ClpP subunits assemble into 2 heptameric rings which stack back to back to give a disk-like structure with a central cavity, resembling the structure of eukaryotic proteasomes.

Its subcellular location is the cytoplasm. It carries out the reaction Hydrolysis of proteins to small peptides in the presence of ATP and magnesium. alpha-casein is the usual test substrate. In the absence of ATP, only oligopeptides shorter than five residues are hydrolyzed (such as succinyl-Leu-Tyr-|-NHMec, and Leu-Tyr-Leu-|-Tyr-Trp, in which cleavage of the -Tyr-|-Leu- and -Tyr-|-Trp bonds also occurs).. In terms of biological role, cleaves peptides in various proteins in a process that requires ATP hydrolysis. Has a chymotrypsin-like activity. Plays a major role in the degradation of misfolded proteins. This Ruthia magnifica subsp. Calyptogena magnifica protein is ATP-dependent Clp protease proteolytic subunit.